The following is a 159-amino-acid chain: NADH-quinone oxidoreductase subunit I (159 aa).

2 4Fe-4S ferredoxin-type domains span residues 51-80 (RRYENGEERCIACKLCEAICPAQAIVIEAD) and 90-119 (TRYDIDMTKCIYCGLCQEACPVDAIVEGPN). Residues C60, C63, C66, C70, C99, C102, C105, and C109 each contribute to the [4Fe-4S] cluster site.

The protein belongs to the complex I 23 kDa subunit family. In terms of assembly, NDH-1 is composed of 14 different subunits. Subunits NuoA, H, J, K, L, M, N constitute the membrane sector of the complex. The cofactor is [4Fe-4S] cluster.

It localises to the cell inner membrane. The catalysed reaction is a quinone + NADH + 5 H(+)(in) = a quinol + NAD(+) + 4 H(+)(out). Functionally, NDH-1 shuttles electrons from NADH, via FMN and iron-sulfur (Fe-S) centers, to quinones in the respiratory chain. The immediate electron acceptor for the enzyme in this species is believed to be ubiquinone. Couples the redox reaction to proton translocation (for every two electrons transferred, four hydrogen ions are translocated across the cytoplasmic membrane), and thus conserves the redox energy in a proton gradient. This chain is NADH-quinone oxidoreductase subunit I, found in Rickettsia conorii (strain ATCC VR-613 / Malish 7).